The following is a 313-amino-acid chain: Cilia- and flagella-associated protein 36 (313 aa).

Residues Ser85 and Ser147 each carry the phosphoserine modification. Residues 147-187 adopt a coiled-coil conformation; it reads SDLEQEEMKILKEVLRKSKEEYDQEEERKRKKQLSEAKTEE. Disordered regions lie at residues 165 to 204 and 262 to 292; these read KEEYDQEEERKRKKQLSEAKTEEHPMQANETAKMSNSQGD and KIKQNQTSEQKGKPAGEVEEMTEKPEMTAEE. Over residues 179–189 the composition is skewed to basic and acidic residues; that stretch reads QLSEAKTEEHP. Residues 192 to 203 are compositionally biased toward polar residues; that stretch reads ANETAKMSNSQG. Residue Ser201 is modified to Phosphoserine. Residues 271-292 show a composition bias toward basic and acidic residues; it reads QKGKPAGEVEEMTEKPEMTAEE.

The protein belongs to the CFAP36 family. As to quaternary structure, interacts with ARL3.

It is found in the nucleus. The protein localises to the cytoplasm. It localises to the cell projection. Its subcellular location is the cilium. The protein resides in the flagellum. May act as an effector for ARL3. In Bos taurus (Bovine), this protein is Cilia- and flagella-associated protein 36.